The primary structure comprises 360 residues: Decorin (360 aa).

The signal sequence occupies residues 1–16 (MKATIIFLLVAQVSWA). Residues 17–30 (GPFQQKGLFDFMLE) constitute a propeptide that is removed on maturation. Ser34 carries an O-linked (Xyl...) (glycosaminoglycan) serine glycan. Intrachain disulfides connect Cys55–Cys61 and Cys59–Cys68. LRR repeat units follow at residues 74-94 (EKVP…NNKI), 95-118 (TEIK…NNKI), 119-142 (SKIS…KNQL), 143-163 (KELP…ENEI), 164-187 (TKVR…TNPL), 188-213 (KSSG…DTNI), 214-234 (TTIP…GNKI), 235-258 (TKVD…FNSI), 259-282 (SAVD…NNKL), 283-305 (VKVP…NNNI), 306-335 (SAIG…SNPV), and 336-360 (QYWE…GNYK). Asn212 carries an N-linked (GlcNAc...) asparagine glycan. 2 N-linked (GlcNAc...) asparagine glycosylation sites follow: Asn263 and Asn304. An intrachain disulfide couples Cys314 to Cys347.

The protein belongs to the small leucine-rich proteoglycan (SLRP) family. SLRP class I subfamily. Binds to type I and type II collagen, fibronectin and TGF-beta. Forms a ternary complex with MFAP2 and ELN. Interacts with DPT. Post-translationally, the attached glycosaminoglycan chain can be either chondroitin 4-sulfate, chondroitin 6-sulfate or dermatan sulfate, depending upon the tissue of origin.

The protein resides in the secreted. The protein localises to the extracellular space. Its subcellular location is the extracellular matrix. May affect the rate of fibrils formation. The chain is Decorin (DCN) from Bos taurus (Bovine).